We begin with the raw amino-acid sequence, 161 residues long: Transcriptional repressor NrdR (161 aa).

Residues 3–34 fold into a zinc finger; it reads CPFCGKYDTKVTDSRLVAEGDQVRRRRQCNDC. The ATP-cone domain occupies 49–139; it reads PRVIKGDGSR…VYRRFQDLDE (91 aa).

This sequence belongs to the NrdR family. Requires Zn(2+) as cofactor.

Negatively regulates transcription of bacterial ribonucleotide reductase nrd genes and operons by binding to NrdR-boxes. The protein is Transcriptional repressor NrdR of Chromohalobacter salexigens (strain ATCC BAA-138 / DSM 3043 / CIP 106854 / NCIMB 13768 / 1H11).